Reading from the N-terminus, the 70-residue chain is Small ribosomal subunit protein bS21 (70 aa).

This sequence belongs to the bacterial ribosomal protein bS21 family.

This Sulfurovum sp. (strain NBC37-1) protein is Small ribosomal subunit protein bS21.